The primary structure comprises 83 residues: Antitoxin ParD1 (83 aa).

Positions 33-60 (IRSALRLLEDRETQLRALREALEAGERS) form a coiled coil. Residues 54–83 (LEAGERSGSSTPFDFDGFLGRKRADASRGR) form a disordered region.

It belongs to the ParD antitoxin family.

Its function is as follows. Antitoxin component of a type II toxin-antitoxin (TA) system. The chain is Antitoxin ParD1 (parD1) from Mycobacterium tuberculosis (strain CDC 1551 / Oshkosh).